Here is a 135-residue protein sequence, read N- to C-terminus: Large ribosomal subunit protein uL16c (135 aa).

This sequence belongs to the universal ribosomal protein uL16 family. As to quaternary structure, part of the 50S ribosomal subunit.

The protein resides in the plastid. It localises to the chloroplast. This chain is Large ribosomal subunit protein uL16c, found in Lepidium virginicum (Virginia pepperweed).